The primary structure comprises 161 residues: Probable ubiquitin-conjugating enzyme E2 16 (161 aa).

In terms of domain architecture, UBC core spans 15–161; sequence IATNRLQKEL…TRWWFHDDKV (147 aa). Cysteine 99 (glycyl thioester intermediate) is an active-site residue.

This sequence belongs to the ubiquitin-conjugating enzyme family.

The catalysed reaction is S-ubiquitinyl-[E1 ubiquitin-activating enzyme]-L-cysteine + [E2 ubiquitin-conjugating enzyme]-L-cysteine = [E1 ubiquitin-activating enzyme]-L-cysteine + S-ubiquitinyl-[E2 ubiquitin-conjugating enzyme]-L-cysteine.. Its pathway is protein modification; protein ubiquitination. In terms of biological role, accepts the ubiquitin from the E1 complex and catalyzes its covalent attachment to other proteins. The sequence is that of Probable ubiquitin-conjugating enzyme E2 16 (UBC16) from Arabidopsis thaliana (Mouse-ear cress).